The primary structure comprises 421 residues: 4-hydroxy-3-methylbut-2-en-1-yl diphosphate synthase (flavodoxin) (421 aa).

[4Fe-4S] cluster contacts are provided by cysteine 298, cysteine 301, cysteine 344, and glutamate 351.

The protein belongs to the IspG family. Requires [4Fe-4S] cluster as cofactor.

It carries out the reaction (2E)-4-hydroxy-3-methylbut-2-enyl diphosphate + oxidized [flavodoxin] + H2O + 2 H(+) = 2-C-methyl-D-erythritol 2,4-cyclic diphosphate + reduced [flavodoxin]. Its pathway is isoprenoid biosynthesis; isopentenyl diphosphate biosynthesis via DXP pathway; isopentenyl diphosphate from 1-deoxy-D-xylulose 5-phosphate: step 5/6. Its function is as follows. Converts 2C-methyl-D-erythritol 2,4-cyclodiphosphate (ME-2,4cPP) into 1-hydroxy-2-methyl-2-(E)-butenyl 4-diphosphate. This Neisseria gonorrhoeae (strain ATCC 700825 / FA 1090) protein is 4-hydroxy-3-methylbut-2-en-1-yl diphosphate synthase (flavodoxin).